We begin with the raw amino-acid sequence, 495 residues long: Phage-like element PBSX protein XkdE (495 aa).

It belongs to the phage portal family. PBSX subfamily.

The polypeptide is Phage-like element PBSX protein XkdE (xkdE) (Bacillus subtilis (strain 168)).